The following is a 204-amino-acid chain: ATP phosphoribosyltransferase (204 aa).

It belongs to the ATP phosphoribosyltransferase family. Short subfamily. Heteromultimer composed of HisG and HisZ subunits.

It localises to the cytoplasm. The enzyme catalyses 1-(5-phospho-beta-D-ribosyl)-ATP + diphosphate = 5-phospho-alpha-D-ribose 1-diphosphate + ATP. The protein operates within amino-acid biosynthesis; L-histidine biosynthesis; L-histidine from 5-phospho-alpha-D-ribose 1-diphosphate: step 1/9. Functionally, catalyzes the condensation of ATP and 5-phosphoribose 1-diphosphate to form N'-(5'-phosphoribosyl)-ATP (PR-ATP). Has a crucial role in the pathway because the rate of histidine biosynthesis seems to be controlled primarily by regulation of HisG enzymatic activity. This chain is ATP phosphoribosyltransferase, found in Leptospira biflexa serovar Patoc (strain Patoc 1 / Ames).